Consider the following 314-residue polypeptide: Malate dehydrogenase (314 aa).

NAD(+) contacts are provided by residues G7–G12 and D32. Substrate is bound by residues R81 and R87. NAD(+)-binding positions include N94 and V117–N119. N119 and R150 together coordinate substrate. H174 functions as the Proton acceptor in the catalytic mechanism.

This sequence belongs to the LDH/MDH superfamily. MDH type 3 family.

The enzyme catalyses (S)-malate + NAD(+) = oxaloacetate + NADH + H(+). In terms of biological role, catalyzes the reversible oxidation of malate to oxaloacetate. This is Malate dehydrogenase from Salinibacter ruber (strain DSM 13855 / M31).